Consider the following 455-residue polypeptide: MIKSRFAPSPTGYLHIGGARTAFFAWIWAKKQHGKFVLRIENTDLERSTQASVDAILQGIDWLGLNYDEGPLYQTDRFDRYKQIIQQLLDEKKAYYCECSKKRLQILREELTKQGKKAKYDGCCRNKNLHTGVVRFNNPKEGIVVFNDVVKGKISINNQELDDLIIARSDNTPTYNLTVVVDDHDMKINIIIRGDDHINNTPKQINLYQALGWHLPEFAHLPMILGNDGIRLSKRHGAVSIMAYRDAGFLPEALLNYLSRLGWSYGNQEIFSINKIVQLFELKNINKASASFNQDKLLWFNQETIKSSSVKNLLSNLTWHLQNQEIIIKDTPNIEIVVRYLQDRCKTLVNMAGELKMFYQDFDTFDEKLAKKFFKDKTPLKRLFVELEMLNTWKADNIKQVVKQVCFELNIGFGRVGQPFRLALSGDGNAGSIDIVAELVGKNKALLRLKMAIDF.

Positions Pro8–Gly18 match the 'HIGH' region motif. Positions Arg231–Arg235 match the 'KMSKS' region motif. Lys234 is a binding site for ATP.

This sequence belongs to the class-I aminoacyl-tRNA synthetase family. Glutamate--tRNA ligase type 1 subfamily. Monomer.

Its subcellular location is the cytoplasm. The catalysed reaction is tRNA(Glu) + L-glutamate + ATP = L-glutamyl-tRNA(Glu) + AMP + diphosphate. In terms of biological role, catalyzes the attachment of glutamate to tRNA(Glu) in a two-step reaction: glutamate is first activated by ATP to form Glu-AMP and then transferred to the acceptor end of tRNA(Glu). This is Glutamate--tRNA ligase from Vesicomyosocius okutanii subsp. Calyptogena okutanii (strain HA).